A 428-amino-acid polypeptide reads, in one-letter code: Chaperone SurA (428 aa).

Positions 1 to 13 are cleaved as a signal peptide; the sequence is MLGALLLSGAVHA. PpiC domains follow at residues 164 to 265 and 276 to 375; these read SEEF…KLLE and RDEV…EVLG.

It is found in the periplasm. It catalyses the reaction [protein]-peptidylproline (omega=180) = [protein]-peptidylproline (omega=0). Chaperone involved in the correct folding and assembly of outer membrane proteins. Recognizes specific patterns of aromatic residues and the orientation of their side chains, which are found more frequently in integral outer membrane proteins. May act in both early periplasmic and late outer membrane-associated steps of protein maturation. The chain is Chaperone SurA from Pseudomonas savastanoi pv. phaseolicola (strain 1448A / Race 6) (Pseudomonas syringae pv. phaseolicola (strain 1448A / Race 6)).